Reading from the N-terminus, the 122-residue chain is Small ribosomal subunit protein uS13 (122 aa).

Residues 95-116 show a composition bias toward basic residues; the sequence is GLPCRGQKTKTNARTRKGKKKT. The segment at 95-122 is disordered; that stretch reads GLPCRGQKTKTNARTRKGKKKTVGAATK.

This sequence belongs to the universal ribosomal protein uS13 family. As to quaternary structure, part of the 30S ribosomal subunit. Forms a loose heterodimer with protein S19. Forms two bridges to the 50S subunit in the 70S ribosome.

Functionally, located at the top of the head of the 30S subunit, it contacts several helices of the 16S rRNA. In the 70S ribosome it contacts the 23S rRNA (bridge B1a) and protein L5 of the 50S subunit (bridge B1b), connecting the 2 subunits; these bridges are implicated in subunit movement. Contacts the tRNAs in the A and P-sites. The chain is Small ribosomal subunit protein uS13 from Aliarcobacter butzleri (strain RM4018) (Arcobacter butzleri).